A 358-amino-acid polypeptide reads, in one-letter code: MEETRAGRYIVRAGSGGQTEDTASGAESVLATLAAVRTRRRSVVCDGPPGSPTDSARHMSDLASLALTAEFGLGCLEAYVRINAGQVLPVVWPPGWNLVLQEIETDEDFKPEDVKAWSHYLCCQTRLAFVGRFVNEGVLSPDQQKKTAVCLISDEGYVFCYVREDTAVYYLARNLMEFARVGLRAVETLHCMRYLTSSLVKRYFRPLLRAWSLGLDTMARFIIRHHGQFMPLTYPPGTELRLCNLRCFENSVEGGHLLRNIKTAFGMRVLGLGTVSLKGENAPFPHLRWPVDLIPIVVAYTGAVYACDVRDDRYIRVGDNLNTFMCLGLNLLFENRRFSGHNGIYDRVPDCPKGRQHR.

Belongs to the herpesviridae US22 family.

It is found in the virion tegument. In Homo sapiens (Human), this protein is Protein UL24 (UL24).